The chain runs to 458 residues: ATP synthase subunit beta (458 aa).

ATP is bound at residue 148-155 (GGAGVGKT).

This sequence belongs to the ATPase alpha/beta chains family. In terms of assembly, F-type ATPases have 2 components, CF(1) - the catalytic core - and CF(0) - the membrane proton channel. CF(1) has five subunits: alpha(3), beta(3), gamma(1), delta(1), epsilon(1). CF(0) has three main subunits: a(1), b(2) and c(9-12). The alpha and beta chains form an alternating ring which encloses part of the gamma chain. CF(1) is attached to CF(0) by a central stalk formed by the gamma and epsilon chains, while a peripheral stalk is formed by the delta and b chains.

It localises to the cell inner membrane. It catalyses the reaction ATP + H2O + 4 H(+)(in) = ADP + phosphate + 5 H(+)(out). Produces ATP from ADP in the presence of a proton gradient across the membrane. The catalytic sites are hosted primarily by the beta subunits. In Alkalilimnicola ehrlichii (strain ATCC BAA-1101 / DSM 17681 / MLHE-1), this protein is ATP synthase subunit beta.